Here is a 142-residue protein sequence, read N- to C-terminus: Large ribosomal subunit protein uL13 (142 aa).

This sequence belongs to the universal ribosomal protein uL13 family. As to quaternary structure, part of the 50S ribosomal subunit.

This protein is one of the early assembly proteins of the 50S ribosomal subunit, although it is not seen to bind rRNA by itself. It is important during the early stages of 50S assembly. The polypeptide is Large ribosomal subunit protein uL13 (Trichlorobacter lovleyi (strain ATCC BAA-1151 / DSM 17278 / SZ) (Geobacter lovleyi)).